A 423-amino-acid chain; its full sequence is Serine--tRNA ligase (423 aa).

230 to 232 (TAE) serves as a coordination point for L-serine. 261 to 263 (RQE) serves as a coordination point for ATP. Residue E284 participates in L-serine binding. An ATP-binding site is contributed by 348-351 (EISS). S384 is a binding site for L-serine.

This sequence belongs to the class-II aminoacyl-tRNA synthetase family. Type-1 seryl-tRNA synthetase subfamily. In terms of assembly, homodimer. The tRNA molecule binds across the dimer.

It is found in the cytoplasm. It catalyses the reaction tRNA(Ser) + L-serine + ATP = L-seryl-tRNA(Ser) + AMP + diphosphate + H(+). The enzyme catalyses tRNA(Sec) + L-serine + ATP = L-seryl-tRNA(Sec) + AMP + diphosphate + H(+). It functions in the pathway aminoacyl-tRNA biosynthesis; selenocysteinyl-tRNA(Sec) biosynthesis; L-seryl-tRNA(Sec) from L-serine and tRNA(Sec): step 1/1. In terms of biological role, catalyzes the attachment of serine to tRNA(Ser). Is also able to aminoacylate tRNA(Sec) with serine, to form the misacylated tRNA L-seryl-tRNA(Sec), which will be further converted into selenocysteinyl-tRNA(Sec). This Thermoanaerobacter pseudethanolicus (strain ATCC 33223 / 39E) (Clostridium thermohydrosulfuricum) protein is Serine--tRNA ligase.